Here is a 230-residue protein sequence, read N- to C-terminus: 3,4-dihydroxy-2-butanone 4-phosphate synthase (230 aa).

Residues 38-39 (RE), Asp-43, 151-155 (RRGHT), and Glu-175 contribute to the D-ribulose 5-phosphate site. Glu-39 contributes to the Mg(2+) binding site. His-154 is a Mg(2+) binding site.

The protein belongs to the DHBP synthase family. Homodimer. It depends on Mg(2+) as a cofactor. The cofactor is Mn(2+).

It carries out the reaction D-ribulose 5-phosphate = (2S)-2-hydroxy-3-oxobutyl phosphate + formate + H(+). It functions in the pathway cofactor biosynthesis; riboflavin biosynthesis; 2-hydroxy-3-oxobutyl phosphate from D-ribulose 5-phosphate: step 1/1. In terms of biological role, catalyzes the conversion of D-ribulose 5-phosphate to formate and 3,4-dihydroxy-2-butanone 4-phosphate. This Vibrio harveyi (Beneckea harveyi) protein is 3,4-dihydroxy-2-butanone 4-phosphate synthase.